We begin with the raw amino-acid sequence, 434 residues long: Histidinol dehydrogenase (434 aa).

Substrate is bound by residues Ser242, Gln264, and His267. Gln264 and His267 together coordinate Zn(2+). Residues Glu332 and His333 each act as proton acceptor in the active site. Positions 333, 366, 420, and 425 each coordinate substrate. Residue Asp366 participates in Zn(2+) binding. His425 contacts Zn(2+).

The protein belongs to the histidinol dehydrogenase family. The cofactor is Zn(2+).

It carries out the reaction L-histidinol + 2 NAD(+) + H2O = L-histidine + 2 NADH + 3 H(+). It participates in amino-acid biosynthesis; L-histidine biosynthesis; L-histidine from 5-phospho-alpha-D-ribose 1-diphosphate: step 9/9. In terms of biological role, catalyzes the sequential NAD-dependent oxidations of L-histidinol to L-histidinaldehyde and then to L-histidine. This chain is Histidinol dehydrogenase, found in Desulfotalea psychrophila (strain LSv54 / DSM 12343).